The sequence spans 153 residues: Troponin C (153 aa).

Ala-1 carries the blocked amino end (Ala) modification. 4 EF-hand domains span residues 10–45 (EQVQ…LGQT), 46–81 (FEEK…FLVE), 86–121 (AMQE…LDDK), and 122–153 (LTED…MMTG). Ca(2+)-binding residues include Asp-59, Asp-61, Ser-63, Glu-65, Glu-70, Asp-99, Asp-110, Asp-135, Asp-137, Ser-139, Thr-141, and Glu-146.

This sequence belongs to the troponin C family.

Its function is as follows. Troponin is the central regulatory protein of striated muscle contraction. Tn consists of three components: Tn-I which is the inhibitor of actomyosin ATPase, Tn-T which contains the binding site for tropomyosin and Tn-C. The binding of calcium to Tn-C abolishes the inhibitory action of Tn on actin filaments. The protein is Troponin C of Tachypleus tridentatus (Japanese horseshoe crab).